Here is an 807-residue protein sequence, read N- to C-terminus: Glycerol-3-phosphate acyltransferase (807 aa).

Positions Cys308 to Met313 match the HXXXXD motif motif.

It belongs to the GPAT/DAPAT family.

The protein localises to the cell inner membrane. It carries out the reaction sn-glycerol 3-phosphate + an acyl-CoA = a 1-acyl-sn-glycero-3-phosphate + CoA. Its pathway is phospholipid metabolism; CDP-diacylglycerol biosynthesis; CDP-diacylglycerol from sn-glycerol 3-phosphate: step 1/3. In Shewanella baltica (strain OS223), this protein is Glycerol-3-phosphate acyltransferase.